We begin with the raw amino-acid sequence, 357 residues long: tRNA-specific 2-thiouridylase MnmA (357 aa).

Residues 7-14 (AMSGGVDS) and Met-33 contribute to the ATP site. Residue Cys-101 is the Nucleophile of the active site. An intrachain disulfide couples Cys-101 to Cys-198. Gly-125 lines the ATP pocket. Residues 148–150 (KDQ) are interaction with tRNA. The Cysteine persulfide intermediate role is filled by Cys-198.

The protein belongs to the MnmA/TRMU family.

It localises to the cytoplasm. The enzyme catalyses S-sulfanyl-L-cysteinyl-[protein] + uridine(34) in tRNA + AH2 + ATP = 2-thiouridine(34) in tRNA + L-cysteinyl-[protein] + A + AMP + diphosphate + H(+). Catalyzes the 2-thiolation of uridine at the wobble position (U34) of tRNA, leading to the formation of s(2)U34. This chain is tRNA-specific 2-thiouridylase MnmA, found in Herpetosiphon aurantiacus (strain ATCC 23779 / DSM 785 / 114-95).